A 243-amino-acid chain; its full sequence is Type III pantothenate kinase (243 aa).

6-13 (DIGNTNLK) lines the ATP pocket. 101–104 (GSDI) serves as a coordination point for substrate. Asp-103 serves as the catalytic Proton acceptor. Residue Thr-125 participates in ATP binding. Residue Thr-176 participates in substrate binding.

It belongs to the type III pantothenate kinase family. As to quaternary structure, homodimer. The cofactor is NH4(+). K(+) is required as a cofactor.

The protein localises to the cytoplasm. It catalyses the reaction (R)-pantothenate + ATP = (R)-4'-phosphopantothenate + ADP + H(+). Its pathway is cofactor biosynthesis; coenzyme A biosynthesis; CoA from (R)-pantothenate: step 1/5. Its function is as follows. Catalyzes the phosphorylation of pantothenate (Pan), the first step in CoA biosynthesis. The protein is Type III pantothenate kinase of Mycoplasma mobile (strain ATCC 43663 / 163K / NCTC 11711) (Mesomycoplasma mobile).